A 401-amino-acid polypeptide reads, in one-letter code: Tumor necrosis factor receptor superfamily member 11B (401 aa).

Positions 1-21 are cleaved as a signal peptide; sequence MNKWLCCALLVLLDIIEWTTQ. TNFR-Cys repeat units follow at residues 24–62, 65–105, 107–142, and 145–185; these read LPPKYLHYDPETGHQLLCDKCAPGTYLKQHCTVRRKTLC, CPDH…NRVC, CEEGRYLEIEFCLKHRSCPPGSGVVQAGTPERNTVC, and CPDG…DNVC. 8 disulfide bridges follow: Cys-41–Cys-54, Cys-44–Cys-62, Cys-65–Cys-80, Cys-83–Cys-97, Cys-87–Cys-105, Cys-107–Cys-118, Cys-124–Cys-142, and Cys-145–Cys-160. Asn-98 carries N-linked (GlcNAc...) asparagine glycosylation. Residues Asn-165 and Asn-178 are each glycosylated (N-linked (GlcNAc...) asparagine). A disulfide bond links Cys-166 and Cys-185. Death domains lie at 198–269 and 283–365; these read DVTL…MVKK and RHLG…THSL. An N-linked (GlcNAc...) asparagine glycan is attached at Asn-289.

In terms of assembly, homodimer. Interacts with TNFSF10 and TNFSF11. In terms of tissue distribution, highly expressed in liver, lung, stomach, intestines and calvaria. Highly expressed in decidua and placenta, and in embryo.

It localises to the secreted. In terms of biological role, acts as a decoy receptor for TNFSF11/RANKL and thereby neutralizes its function in osteoclastogenesis. Inhibits the activation of osteoclasts and promotes osteoclast apoptosis in vitro. Bone homeostasis seems to depend on the local ratio between TNFSF11 and TNFRSF11B. May also play a role in preventing arterial calcification. May act as decoy receptor for TNFSF10/TRAIL and protect against apoptosis. TNFSF10/TRAIL binding blocks the inhibition of osteoclastogenesis. This is Tumor necrosis factor receptor superfamily member 11B (Tnfrsf11b) from Mus musculus (Mouse).